A 195-amino-acid chain; its full sequence is PRS fimbrial minor pilin protein (195 aa).

An N-terminal signal peptide occupies residues 1–22; that stretch reads MRLRFSVPLFFFGCVFVHGVFA. C58 and C97 are disulfide-bonded.

Belongs to the fimbrial protein family.

The protein localises to the secreted. It is found in the fimbrium. Functionally, fimbriae (also called pili), polar filaments radiating from the surface of the bacterium to a length of 0.5-1.5 micrometers and numbering 100-300 per cell, enable bacteria to colonize the epithelium of specific host organs. In terms of biological role, seems to anchor the pilus to the bacterial cell. In addition the stoichiometric relationship between PrsH and PrsA determines the pilus length. The polypeptide is PRS fimbrial minor pilin protein (prsH) (Escherichia coli).